The chain runs to 1878 residues: DNA polymerase (1878 aa).

Disordered regions lie at residues 691-727 and 1839-1878; these read LFQADDDDDDDDEDEDDGLLDERQQDSAEDMKKKGPN and TQDDVVKKKRAPKRAAIDRKSGSGGKKSKITAGKTAGTMF. Positions 694–709 are enriched in acidic residues; sequence ADDDDDDDDEDEDDGL. Positions 710–723 are enriched in basic and acidic residues; that stretch reads LDERQQDSAEDMKK. Residues 1868 to 1878 are compositionally biased toward low complexity; it reads ITAGKTAGTMF.

This sequence belongs to the DNA polymerase type-B family.

The catalysed reaction is DNA(n) + a 2'-deoxyribonucleoside 5'-triphosphate = DNA(n+1) + diphosphate. The polypeptide is DNA polymerase (Magallana gigas (Pacific oyster)).